Consider the following 296-residue polypeptide: Elongation factor Ts (296 aa).

The tract at residues 79–82 (TDFV) is involved in Mg(2+) ion dislocation from EF-Tu.

It belongs to the EF-Ts family.

The protein resides in the cytoplasm. Associates with the EF-Tu.GDP complex and induces the exchange of GDP to GTP. It remains bound to the aminoacyl-tRNA.EF-Tu.GTP complex up to the GTP hydrolysis stage on the ribosome. The polypeptide is Elongation factor Ts (Acholeplasma laidlawii (strain PG-8A)).